Here is a 234-residue protein sequence, read N- to C-terminus: uncharacterized protein (234 aa).

This is an uncharacterized protein from Escherichia coli (strain K12).